A 359-amino-acid chain; its full sequence is 3-isopropylmalate dehydrogenase (359 aa).

Residue 74-85 (GPKWGTGSVRPE) coordinates NAD(+). Substrate is bound by residues arginine 92, arginine 102, arginine 131, and aspartate 220. Residues aspartate 220, aspartate 245, and aspartate 249 each coordinate Mg(2+). 284 to 295 (GSAPDLPANKVN) provides a ligand contact to NAD(+).

Belongs to the isocitrate and isopropylmalate dehydrogenases family. In terms of assembly, homodimer. The cofactor is Mg(2+). Requires Mn(2+) as cofactor.

The protein resides in the cytoplasm. It catalyses the reaction (2R,3S)-3-isopropylmalate + NAD(+) = 4-methyl-2-oxopentanoate + CO2 + NADH. The protein operates within amino-acid biosynthesis; L-leucine biosynthesis; L-leucine from 3-methyl-2-oxobutanoate: step 3/4. Its function is as follows. Catalyzes the oxidation of 3-carboxy-2-hydroxy-4-methylpentanoate (3-isopropylmalate) to 3-carboxy-4-methyl-2-oxopentanoate. The product decarboxylates to 4-methyl-2 oxopentanoate. The protein is 3-isopropylmalate dehydrogenase (LEU2) of Kluyveromyces marxianus (Yeast).